Here is a 390-residue protein sequence, read N- to C-terminus: GPI inositol-deacylase (390 aa).

A helical transmembrane segment spans residues 21–41 (FIVYFIICLTIIISALGVYLY). Ser-202 is an active-site residue. The chain crosses the membrane as a helical span at residues 354–374 (VHLLSLTIFALKWTIIVLAII).

The protein belongs to the GPI inositol-deacylase family.

Its subcellular location is the endoplasmic reticulum membrane. In terms of biological role, involved in inositol deacylation of GPI-anchored proteins which plays important roles in the quality control and ER-associated degradation of GPI-anchored proteins. This Candida albicans (strain SC5314 / ATCC MYA-2876) (Yeast) protein is GPI inositol-deacylase (BST1).